The chain runs to 960 residues: Chromo domain-containing protein 1 (960 aa).

The Chromo domain occupies 22-74 (YEVEDILADRVNKNGINEYYIKWAGYDWYDNTWEPEQNLFGAEKVLKKWKKRK).

In terms of assembly, ago1, chp1 and tas3 interact to form the core of the RNA-induced transcriptional silencing (RITS) complex. The RITS complex interacts with the RDRC complex via interaction between ago1 and hrr1. Clr4 has a role in mediating this interaction. Interacts with dri1.

It is found in the nucleus. Its subcellular location is the cytoplasm. It localises to the cytoskeleton. The protein resides in the microtubule organizing center. The protein localises to the spindle pole body. In terms of biological role, component of the kinetochore which plays a role in stabilizing microtubules and so allowing accurate chromosome segregation. Has a role in the RNA interference (RNAi) pathway which is important for heterochromatin formation and accurate chromosome segregation. A member of the RNA-induced transcriptional silencing (RITS) complex which is involved in the biosynthesis of dsRNA from primer siRNAs provided by the RNA-directed RNA polymerase (RDRC) complex. The chain is Chromo domain-containing protein 1 from Schizosaccharomyces pombe (strain 972 / ATCC 24843) (Fission yeast).